A 261-amino-acid polypeptide reads, in one-letter code: RING finger and CHY zinc finger domain-containing protein 1 (261 aa).

A CHY-type zinc finger spans residues 13-80 (LAQGPRGCEH…AQQTCEDCST (68 aa)). C20, H22, C33, C34, C40, C43, H44, H50, C62, C65, C75, C78, C87, C90, H101, C102, C105, C108, H118, C119, C122, C125, H134, and C136 together coordinate Zn(2+). The CTCHY-type zinc-finger motif lies at 82-144 (FGEYYCSICH…KCIENVSRQN (63 aa)). An RING-type zinc finger spans residues 145–189 (CPICLEDIHTSRVVAHVLPCGHLLHRTCYEEMLKEGYRCPLCMHS).

As to quaternary structure, monomer and homodimer. Interacts with AR, MDM2, KAT5, PLAG1, PLAGL2, COPE, UBE2D2 and GORAB/NTKLBP1. In terms of processing, subject to ubiquitination and proteasomal degradation. Interaction with PLAGL2 or KAT5 enhances protein stability. Detected in testis, liver, kidney and heart.

It is found in the nucleus. The protein resides in the nucleus speckle. Its subcellular location is the cytoplasm. The enzyme catalyses S-ubiquitinyl-[E2 ubiquitin-conjugating enzyme]-L-cysteine + [acceptor protein]-L-lysine = [E2 ubiquitin-conjugating enzyme]-L-cysteine + N(6)-ubiquitinyl-[acceptor protein]-L-lysine.. The protein operates within protein modification; protein ubiquitination. Functionally, E3 ubiquitin-protein ligase that mediates ubiquitination of target proteins, including p53/TP53, TP73, HDAC1 and CDKN1B. Mediates ubiquitination and degradation of p53/TP53; preferentially acts on tetrameric p53/TP53. Catalyzes monoubiquitinates the translesion DNA polymerase POLH. Involved in the ribosome-associated quality control (RQC) pathway, which mediates the extraction of incompletely synthesized nascent chains from stalled ribosomes: RCHY1 acts downstream of NEMF and recognizes CAT tails associated with stalled nascent chains, leading to their ubiquitination and degradation. The sequence is that of RING finger and CHY zinc finger domain-containing protein 1 (Rchy1) from Mus musculus (Mouse).